The sequence spans 372 residues: Ephrin type-A receptor 8 (372 aa).

The Protein kinase domain maps to I2–V263. ATP is bound by residues I8–V16 and K34. The active-site Proton acceptor is D127. Position 206 is a phosphotyrosine; by autocatalysis (Y206). In terms of domain architecture, SAM spans N297–L372. The PDZ-binding signature appears at R370–L372.

In terms of assembly, heterotetramer upon binding of the ligand. The heterotetramer is composed of an ephrin dimer and a receptor dimer. Oligomerization is probably required to induce biological responses. May also form heterodimers with other ephrin receptors. Interacts with FYN; possible downstream effector of EPHA8 in regulation of cell adhesion. Interacts with PIK3CG; regulates integrin-mediated cell adhesion to substrate. Interacts with TIAM1; regulates clathrin-mediated endocytosis of EPHA8. Interacts with ANKS1A and ANKS1B; EPHA8 kinase activity-independent but stimulated by EPHA8 ubiquitination. Phosphorylated. Phosphorylation is stimulated upon binding of its ligands including EFNA2, EFNA3 and EFNA5. Autophosphorylation on Tyr-206 modulates tyrosine kinase activity. In terms of processing, ubiquitinated. Ubiquitination by CBL regulates the receptor stability and activity through proteasomal degradation. ANKS1A prevents ubiquitination and degradation. As to expression, most abundant in brain.

The protein resides in the cell membrane. Its subcellular location is the cell projection. It localises to the early endosome membrane. The enzyme catalyses L-tyrosyl-[protein] + ATP = O-phospho-L-tyrosyl-[protein] + ADP + H(+). Its function is as follows. Receptor tyrosine kinase which binds promiscuously GPI-anchored ephrin-A family ligands residing on adjacent cells, leading to contact-dependent bidirectional signaling into neighboring cells. The signaling pathway downstream of the receptor is referred to as forward signaling while the signaling pathway downstream of the ephrin ligand is referred to as reverse signaling. The GPI-anchored ephrin-A EFNA2, EFNA3, and EFNA5 are able to activate EPHA8 through phosphorylation. With EFNA5 may regulate integrin-mediated cell adhesion and migration on fibronectin substrate but also neurite outgrowth. During development of the nervous system also plays a role in axon guidance. Downstream effectors of the EPHA8 signaling pathway include FYN which promotes cell adhesion upon activation by EPHA8 and the MAP kinases in the stimulation of neurite outgrowth. The protein is Ephrin type-A receptor 8 (Epha8) of Rattus norvegicus (Rat).